The following is a 640-amino-acid chain: Chaperone protein DnaK (640 aa).

Residue T201 is modified to Phosphothreonine; by autocatalysis. Low complexity predominate over residues 603-621; it reads AASADQGGAPGADAGNAGK. The tract at residues 603-625 is disordered; that stretch reads AASADQGGAPGADAGNAGKAQDD.

Belongs to the heat shock protein 70 family.

Acts as a chaperone. The polypeptide is Chaperone protein DnaK (Stenotrophomonas maltophilia (strain K279a)).